A 401-amino-acid chain; its full sequence is Phosphoglycerate kinase (401 aa).

Residues 24 to 26, arginine 40, 63 to 66, arginine 122, and arginine 155 each bind substrate; these read DFN and HFGR. ATP is bound by residues lysine 206, glycine 297, glutamate 328, and 357–360; that span reads GGDS.

The protein belongs to the phosphoglycerate kinase family. In terms of assembly, monomer.

It localises to the cytoplasm. It carries out the reaction (2R)-3-phosphoglycerate + ATP = (2R)-3-phospho-glyceroyl phosphate + ADP. It functions in the pathway carbohydrate degradation; glycolysis; pyruvate from D-glyceraldehyde 3-phosphate: step 2/5. The polypeptide is Phosphoglycerate kinase (Acaryochloris marina (strain MBIC 11017)).